The sequence spans 145 residues: ATP synthase epsilon chain (145 aa).

This sequence belongs to the ATPase epsilon chain family. In terms of assembly, F-type ATPases have 2 components, CF(1) - the catalytic core - and CF(0) - the membrane proton channel. CF(1) has five subunits: alpha(3), beta(3), gamma(1), delta(1), epsilon(1). CF(0) has three main subunits: a, b and c.

It localises to the cell inner membrane. Produces ATP from ADP in the presence of a proton gradient across the membrane. This is ATP synthase epsilon chain from Francisella tularensis subsp. mediasiatica (strain FSC147).